We begin with the raw amino-acid sequence, 305 residues long: tRNA uridine(34) hydroxylase (305 aa).

The Rhodanese domain maps to 125-219 (ADENTVVVDK…YLEEVPREQS (95 aa)). Cys-179 acts as the Cysteine persulfide intermediate in catalysis.

Belongs to the TrhO family.

It catalyses the reaction uridine(34) in tRNA + AH2 + O2 = 5-hydroxyuridine(34) in tRNA + A + H2O. In terms of biological role, catalyzes oxygen-dependent 5-hydroxyuridine (ho5U) modification at position 34 in tRNAs. In Brucella abortus (strain S19), this protein is tRNA uridine(34) hydroxylase.